A 326-amino-acid polypeptide reads, in one-letter code: Microtubule-associated protein RP/EB family member 2 (326 aa).

Phosphoserine is present on Ser-9. The 103-residue stretch at 56–158 (TMSRHDIIAW…FIQWFKKFYD (103 aa)) folds into the Calponin-homology (CH) domain. Phosphotyrosine is present on Tyr-166. Disordered stretches follow at residues 170–239 (EARQ…DKDL) and 298–326 (ASDE…QEEY). Residues 186-326 (QIFNLPKKSH…EQQPQQQEEY (141 aa)) are DCTN1-binding. Residues 199 to 233 (SPTAGAAKSSPASKPGSTPSRPSSAKRASSSGSAS) show a composition bias toward low complexity. 2 positions are modified to phosphoserine: Ser-218 and Ser-235. The EB1 C-terminal domain maps to 235 to 305 (SDKDLETQVI…LYASDEHEGH (71 aa)). Residues 258–301 (EGVEKERDFYFGKLREIELLCQEHGQENDDLVQRLMDVLYASDE) are APC-binding. Positions 299–316 (SDEHEGHPEEPEAEEQVH) are enriched in basic and acidic residues. Over residues 317–326 (EQQPQQQEEY) the composition is skewed to low complexity.

The protein belongs to the MAPRE family. As to quaternary structure, interacts with DCTN1. Interacts with APC (via C-terminal). Interacts with monomeric and polymerized tubulin. Interacts with SLAIN1. Interacts (via the N-terminal region) with BAG1. Interacts with ASB14. Interacts with HAX1; this interaction is essential for epidermal cell migration. Post-translationally, phosphorylated at Ser-235 by CK2 leading to enhanced cell adhesion. Phosphorylated by CDK1 and AURKB during mitosis reduces the binding affinity of MAPRE2 for microtubules. In terms of processing, ubiquitinated in an ASB14-dependent manner; leading to proteasomal degradation.

The protein localises to the cytoplasm. Its subcellular location is the cytoskeleton. Its function is as follows. Adapter protein that is involved in microtubule polymerization, and spindle function by stabilizing microtubules and anchoring them at centrosomes. Therefore, ensures mitotic progression and genome stability. Acts as a central regulator of microtubule reorganization in apico-basal epithelial differentiation. Plays a role during oocyte meiosis by regulating microtubule dynamics. Participates in neurite growth by interacting with plexin B3/PLXNB3 and microtubule reorganization during apico-basal epithelial differentiation. Also plays an essential role for cell migration and focal adhesion dynamics. Mechanistically, recruits HAX1 to microtubules in order to regulate focal adhesion dynamics. This Bos taurus (Bovine) protein is Microtubule-associated protein RP/EB family member 2 (MAPRE2).